The following is a 208-amino-acid chain: Ras-related protein M-Ras (208 aa).

Positions 21, 22, 23, 24, 25, 26, 27, 28, 38, 39, 40, 42, 44, and 45 each coordinate GTP. Serine 27 contacts Mg(2+). Positions 42 to 50 match the Effector region motif; it reads YDPTIEDSY. Residues threonine 45 and aspartate 67 each coordinate Mg(2+). The GTP site is built by glycine 70, asparagine 126, lysine 127, aspartate 129, serine 156, alanine 157, and lysine 158. Cysteine methyl ester is present on cysteine 205. Cysteine 205 is lipidated: S-geranylgeranyl cysteine. Positions 206 to 208 are cleaved as a propeptide — removed in mature form; that stretch reads VIL.

This sequence belongs to the small GTPase superfamily. Ras family. In terms of assembly, component of the SHOC2-MRAS-PP1c (SMP) holophosphatase complex consisting of SHOC2, GTP-bound M-Ras/MRAS and the catalytic subunit of protein phosphatase 1 (either PPP1CA, PPP1CB or PPP1CC). Interacts (active GTP-bound form) with both SHOC2 and PP1c (all isoforms) to form a tertiary complex; SHOC2 and PP1c preferably bind M-Ras/MRAS, but they also bind K-Ras/KRAS, N-Ras/NRAS and H-Ras/HRAS. Interacts with RGL3. Interacts (active GTP-bound form preferentially) with RGS14. Mg(2+) serves as cofactor. As to expression, expressed in skeletal muscle cells.

It localises to the cell membrane. The enzyme catalyses GTP + H2O = GDP + phosphate + H(+). Signal transducer in the Ras-MAPK signaling pathway that regulates cell proliferation and survival. Core component of the SHOC2-MRAS-PP1c (SMP) holophosphatase complex that regulates the MAPK pathway activation. The formation of the SMP complex only occurs when MRAS is GTP-bound. MRAS has low intrinsic GTPase activity and may require additional factors for activation. The SMP complex specifically dephosphorylates the inhibitory phosphorylation at 'Ser-259' of RAF1 kinase, 'Ser-365' of BRAF kinase and 'Ser-214' of ARAF kinase, stimulating their kinase activities. The sequence is that of Ras-related protein M-Ras (Mras) from Rattus norvegicus (Rat).